The primary structure comprises 323 residues: Serine racemase (323 aa).

The ATP site is built by Ser32, Ser33, and Lys52. Lys57 (proton acceptor) is an active-site residue. Lys57 is subject to Lysino-D-alanine (Lys); alternate. At Lys57 the chain carries N6-(pyridoxal phosphate)lysine; alternate. Thr79 serves as a coordination point for Ca(2+). Residue Ser82 is the Proton acceptor of the active site. Residue Asn84 coordinates pyridoxal 5'-phosphate. Residues Gln87 and Tyr119 each contribute to the ATP site. Position 176 (Asp176) interacts with Mg(2+). Gly183, Gly184, Gly185, Gly186, and Leu187 together coordinate pyridoxal 5'-phosphate. Positions 208, 212, and 214 each coordinate Ca(2+). Mg(2+) is bound by residues Glu208, Gly212, and Asp214. Mn(2+)-binding residues include Glu208, Gly212, and Asp214. Lys277 contacts ATP. Residue Ser308 participates in pyridoxal 5'-phosphate binding. Position 311 (Asn311) interacts with ATP.

This sequence belongs to the serine/threonine dehydratase family. In terms of assembly, homodimer. The cofactor is Mg(2+). Requires Mn(2+) as cofactor. It depends on Ca(2+) as a cofactor. Pyridoxal 5'-phosphate is required as a cofactor. Post-translationally, modification of the active site Lys by its substrate Ser to lysino-D-alanine reduces but does not abolish enzyme activity.

It catalyses the reaction L-serine = D-serine. The catalysed reaction is L-serine = pyruvate + NH4(+). The enzyme catalyses D-serine = pyruvate + NH4(+). With respect to regulation, allosterically activated by ATP, by magnesium, and possibly also by other divalent metal cations. Functionally, catalyzes the synthesis of D-serine from L-serine. Has dehydratase activity towards both L-serine and D-serine. This is Serine racemase from Schizosaccharomyces pombe (strain 972 / ATCC 24843) (Fission yeast).